The following is a 25-amino-acid chain: YIINVPPRCPPGSKFVKNKCRVIVP.

Cys9 and Cys20 are joined by a disulfide.

As to expression, expressed by the venom gland.

Its subcellular location is the secreted. Its function is as follows. Serine protease inhibitor which exhibits antifibrinolytic, antielastolytic and antimicrobial activities. Displays antimicrobial activity against bacteria and fungi. Likely functions in the innate immune response to microbial infection and possibly in the venom, as an antifibrinolytic agent. The chain is Secapin-1 from Apis mellifera (Honeybee).